The primary structure comprises 950 residues: MTLREGLPLFHQQFTALFKKNLLLSWRNKRATCLHLFSSFFFILLIFSIEESSKASDLTSTRHKNVTDPKALVSLPILPCEDKFFVRLPCFDFVWSGNQSRRVTDIVSAIMANNPGRPIPTNKVQSFTKPEEVDAWFMSHPSQVTGALHFVEKNATVISYGIQTNSSSEKKRGRREDPTFKFLVPLQIAAEREIARSLIGDPKFSWDFGFKEFARPAIGGEVIISAFYLMGPVFFLAFSMFGFVLQLGSVVTEKELKLREAMTTMGVYESAYWLSWLIWEGILTFVSSLFLVLFGMMFQFEFFLKNSFVLVFLLFFLFQFNMIGLAFALSSIISKSSSATTVGFLVFLVGFITQIVTTAGFPYSSAYSIGSRVIWSLFPPNTFSAGLQLLLEATSSPGDSGISWSERAICAGGESTCVITTNKIYIWLVGTFFFWFVLALYFDNIIPNASGVRKSIFYFLKPSYWTGKEGNKVEEGSICSCIGSVPPVEHITPEDEDVLEEEILVKQQAMDGRVDPNIAVQIHGLAKTYPGTTKLGCCKCTKTSPFHAVKGLWMNIAKDQLFCLLGPNGAGKTTTISCLTGINPVTGGDAKIYGNSIRSSVGMSNIRKMIGVCPQFDILWDALSSEEHLHLFASIKGLPPSSIKSIAEKLLVDVKLTGSAKIRAGSYSGGMKRRLSVAIALIGDPKLVFLDEPTTGMDPITRRHVWDIIQESKKGRAIILTTHSMEEADILSDRIGIMAKGRLRCIGTSIRLKSRFGTGFVATVSFIENKKDGAPEPLKRFFKERLKVEPTEENKAFMTFVIPHDKEQLLKGFFAELQDRESEFGIADIQLGLATLEEVFLNIARRAELESATVEGTMVTLELESGIAVEIPVGARFVGIPGTENAENPRGLMVEVYWQQDGSGSMCISGHSAEMRIPENVSVIYEPSSQVLGHGQRRVRGIVIDYESNN.

Transmembrane regions (helical) follow at residues 31 to 51 (ATCLHLFSSFFFILLIFSIEE), 223 to 243 (IISAFYLMGPVFFLAFSMFGF), 276 to 296 (WLIWEGILTFVSSLFLVLFGM), 308 to 328 (FVLVFLLFFLFQFNMIGLAFA), 342 to 362 (VGFLVFLVGFITQIVTTAGFP), and 426 to 446 (IWLVGTFFFWFVLALYFDNII). The ABC transporter domain occupies 520–765 (VQIHGLAKTY…FGTGFVATVS (246 aa)). 566 to 573 (GPNGAGKT) serves as a coordination point for ATP.

Belongs to the ABC transporter superfamily. ABCA family. CPR flippase (TC 3.A.1.211) subfamily. Highly expressed in siliques. Detected in seedlings, rosette leaves, stems and flowers.

Its subcellular location is the endoplasmic reticulum membrane. Mediates the transport of acyl-CoAs and/or free fatty acids to the endoplasmic reticulum. Has no effect on the selectivity of fatty acid incorporation into triacylglycerol or further desaturation steps. The protein is ABC transporter A family member 9 (ABCA9) of Arabidopsis thaliana (Mouse-ear cress).